A 210-amino-acid chain; its full sequence is Na(+)-translocating NADH-quinone reductase subunit D (210 aa).

The next 6 membrane-spanning stretches (helical) occupy residues 14 to 34, 42 to 62, 72 to 92, 96 to 116, 131 to 151, and 178 to 198; these read PIIN…ALAV, LVMS…ISLI, IIVQ…VLQA, EIAK…IVMG, FMDG…VGFF, and NGLL…IWVI.

This sequence belongs to the NqrDE/RnfAE family. Composed of six subunits; NqrA, NqrB, NqrC, NqrD, NqrE and NqrF.

The protein resides in the cell inner membrane. It carries out the reaction a ubiquinone + n Na(+)(in) + NADH + H(+) = a ubiquinol + n Na(+)(out) + NAD(+). Its function is as follows. NQR complex catalyzes the reduction of ubiquinone-1 to ubiquinol by two successive reactions, coupled with the transport of Na(+) ions from the cytoplasm to the periplasm. NqrA to NqrE are probably involved in the second step, the conversion of ubisemiquinone to ubiquinol. This is Na(+)-translocating NADH-quinone reductase subunit D from Shewanella denitrificans (strain OS217 / ATCC BAA-1090 / DSM 15013).